The following is a 192-amino-acid chain: 3-hydroxyanthranilate 3,4-dioxygenase 1 (192 aa).

Arg50 is an O2 binding site. The Fe cation site is built by His54, Glu60, and His102. A substrate-binding site is contributed by Glu60. The substrate site is built by Arg106 and Glu116. The a divalent metal cation site is built by Cys131, Cys134, Cys168, and Cys171.

It belongs to the 3-HAO family. The cofactor is Fe(2+).

The protein resides in the cytoplasm. It carries out the reaction 3-hydroxyanthranilate + O2 = (2Z,4Z)-2-amino-3-carboxymuconate 6-semialdehyde. It participates in cofactor biosynthesis; NAD(+) biosynthesis; quinolinate from L-kynurenine: step 3/3. Catalyzes the oxidative ring opening of 3-hydroxyanthranilate to 2-amino-3-carboxymuconate semialdehyde, which spontaneously cyclizes to quinolinate. The protein is 3-hydroxyanthranilate 3,4-dioxygenase 1 (bna1-1) of Aspergillus clavatus (strain ATCC 1007 / CBS 513.65 / DSM 816 / NCTC 3887 / NRRL 1 / QM 1276 / 107).